Reading from the N-terminus, the 606-residue chain is Putative helicase 172L (606 aa).

Positions 59-264 (GEKTWGVRGG…WAQLRFCGYK (206 aa)) constitute a Helicase ATP-binding domain. 72–79 (LCMGLGKT) contacts ATP. Residues 437-586 (YIKSSNFEIS…ASYLEGKERI (150 aa)) form the Helicase C-terminal domain.

Belongs to the SNF2/RAD54 helicase family.

The chain is Putative helicase 172L from Invertebrate iridescent virus 6 (IIV-6).